We begin with the raw amino-acid sequence, 463 residues long: Argininosuccinate lyase (463 aa).

It belongs to the lyase 1 family. Argininosuccinate lyase subfamily.

The protein localises to the cytoplasm. The enzyme catalyses 2-(N(omega)-L-arginino)succinate = fumarate + L-arginine. Its pathway is amino-acid biosynthesis; L-arginine biosynthesis; L-arginine from L-ornithine and carbamoyl phosphate: step 3/3. The chain is Argininosuccinate lyase from Streptococcus pneumoniae (strain 70585).